Consider the following 158-residue polypeptide: Small ribosomal subunit protein uS7c (158 aa).

Belongs to the universal ribosomal protein uS7 family. In terms of assembly, part of the 30S ribosomal subunit.

The protein resides in the plastid. It localises to the chloroplast. Functionally, one of the primary rRNA binding proteins, it binds directly to 16S rRNA where it nucleates assembly of the head domain of the 30S subunit. The sequence is that of Small ribosomal subunit protein uS7c (rps7) from Trieres chinensis (Marine centric diatom).